A 175-amino-acid chain; its full sequence is Pre-mRNA-splicing factor SNT309 (175 aa).

As to quaternary structure, belongs to the NTC complex (or PRP19-associated complex), composed of at least CEF1, CLF1, ISY1, NTC20, SNT309, SYF1, SYF2, and PRP19. The NTC complex associates with the spliceosome after the release of the U1 and U4 snRNAs and forms the CWC spliceosome subcomplex (or CEF1-associated complex) reminiscent of a late-stage spliceosome composed also of the U2, U5 and U6 snRNAs and at least BUD13, BUD31, BRR2, CDC40, CUS1, CWC2, CWC15, CWC21, CWC22, CWC23, CWC24, CWC25, CWC27, ECM2, HSH155, IST3, LEA1, MSL1, PRP8, PRP9, PRP11, PRP21, PRP22, PRP45, PRP46, SLU7, SMB1, SMD1, SMD2, SMD3, SMX2, SMX3, SNU114, SPP2, RSE1 and YJU2. Interacts with PRP19.

The protein resides in the nucleus. Functionally, involved in pre-mRNA splicing by stabilizing the NTC (or PRP19-associated complex). As a component of the NTC complex, associates to the spliceosome to mediate conformational rearrangement or to stabilize the structure of the spliceosome after U4 snRNA dissociation, which leads to spliceosome maturation. The polypeptide is Pre-mRNA-splicing factor SNT309 (SNT309) (Saccharomyces cerevisiae (strain ATCC 204508 / S288c) (Baker's yeast)).